Reading from the N-terminus, the 429-residue chain is Adenylosuccinate synthetase (429 aa).

GTP is bound by residues 13–19 (GDEGKGK) and 41–43 (GHT). D14 functions as the Proton acceptor in the catalytic mechanism. Mg(2+)-binding residues include D14 and G41. Residues 14–17 (DEGK), 39–42 (NAGH), T130, R144, Q224, T239, and R303 contribute to the IMP site. Residue H42 is the Proton donor of the active site. 299–305 (ATTGRAR) serves as a coordination point for substrate. GTP contacts are provided by residues R305, 331–333 (KLD), and 412–414 (STG).

It belongs to the adenylosuccinate synthetase family. Homodimer. Requires Mg(2+) as cofactor.

Its subcellular location is the cytoplasm. The catalysed reaction is IMP + L-aspartate + GTP = N(6)-(1,2-dicarboxyethyl)-AMP + GDP + phosphate + 2 H(+). Its pathway is purine metabolism; AMP biosynthesis via de novo pathway; AMP from IMP: step 1/2. Its function is as follows. Plays an important role in the de novo pathway of purine nucleotide biosynthesis. Catalyzes the first committed step in the biosynthesis of AMP from IMP. The protein is Adenylosuccinate synthetase of Psychrobacter arcticus (strain DSM 17307 / VKM B-2377 / 273-4).